The sequence spans 250 residues: NAD-dependent protein deacylase 1 (250 aa).

The 250-residue stretch at 1-250 (MRAVVELLAG…PELLRRAFPG (250 aa)) folds into the Deacetylase sirtuin-type domain. Residue 19-39 (GAGVSAESGIPTFRDALGGLW) coordinates NAD(+). Residues Tyr64 and Arg67 each contribute to the substrate site. 98–101 (QNVD) contacts NAD(+). The active-site Proton acceptor is His116. Zn(2+) contacts are provided by Cys124, Cys127, Cys152, and Cys155. NAD(+) is bound by residues 192 to 194 (GTS), 218 to 220 (NPQ), and Ala236.

The protein belongs to the sirtuin family. Class III subfamily. Zn(2+) is required as a cofactor.

It localises to the cytoplasm. The catalysed reaction is N(6)-acetyl-L-lysyl-[protein] + NAD(+) + H2O = 2''-O-acetyl-ADP-D-ribose + nicotinamide + L-lysyl-[protein]. The enzyme catalyses N(6)-succinyl-L-lysyl-[protein] + NAD(+) + H2O = 2''-O-succinyl-ADP-D-ribose + nicotinamide + L-lysyl-[protein]. In terms of biological role, NAD-dependent lysine deacetylase and desuccinylase that specifically removes acetyl and succinyl groups on target proteins. Modulates the activities of several proteins which are inactive in their acylated form. The protein is NAD-dependent protein deacylase 1 of Pseudomonas aeruginosa (strain ATCC 15692 / DSM 22644 / CIP 104116 / JCM 14847 / LMG 12228 / 1C / PRS 101 / PAO1).